The primary structure comprises 426 residues: D-tagatose-1,6-bisphosphate aldolase subunit KbaZ (426 aa).

The protein belongs to the GatZ/KbaZ family. KbaZ subfamily. As to quaternary structure, forms a complex with KbaY.

Its pathway is carbohydrate metabolism; D-tagatose 6-phosphate degradation; D-glyceraldehyde 3-phosphate and glycerone phosphate from D-tagatose 6-phosphate: step 2/2. Its function is as follows. Component of the tagatose-1,6-bisphosphate aldolase KbaYZ that is required for full activity and stability of the Y subunit. Could have a chaperone-like function for the proper and stable folding of KbaY. When expressed alone, KbaZ does not show any aldolase activity. The chain is D-tagatose-1,6-bisphosphate aldolase subunit KbaZ from Escherichia coli (strain SMS-3-5 / SECEC).